We begin with the raw amino-acid sequence, 264 residues long: Apolipoprotein A-I (264 aa).

The N-terminal stretch at 1–18 (MKAVVLAVAVLFLTGSQA) is a signal peptide. 2 consecutive repeat copies span residues 67–88 (LNLL…EQLG) and 89–110 (SVTK…QQMN). Residues 67–264 (LNLLANWNTL…DQASKQLSAQ (198 aa)) are 10 X approximate tandem repeats. Position 109 is a methionine sulfoxide (M109). One copy of the 3; half-length repeat lies at 111–121 (KDLEEVKQKVQ). A run of 5 repeats spans residues 122–142 (SYLD…RDKV), 144–165 (PLGK…EKLA), 166–187 (PLGQ…THLG), 188–208 (SYTQ…KESA), and 209–229 (PVSE…EKAK). The residue at position 193 (M193) is a Methionine sulfoxide. The stretch at 230–240 (PALEDLRQGLM) is one 9; half-length repeat. M240 carries the methionine sulfoxide modification. The stretch at 241–264 (PVMESLKASFLSSIDQASKQLSAQ) is repeat 10.

It belongs to the apolipoprotein A1/A4/E family. In terms of assembly, homodimer. Interacts with APOA1BP and CLU. Component of a sperm activating protein complex (SPAP), consisting of APOA1, an immunoglobulin heavy chain, an immunoglobulin light chain and albumin. Interacts with NDRG1. Interacts with SCGB3A2. Interacts with NAXE and YJEFN3. In terms of processing, glycosylated. Post-translationally, palmitoylated. Phosphorylation sites are present in the extracellular medium. In terms of tissue distribution, major protein of plasma HDL, also found in chylomicrons.

The protein resides in the secreted. Its function is as follows. Participates in the reverse transport of cholesterol from tissues to the liver for excretion by promoting cholesterol efflux from tissues and by acting as a cofactor for the lecithin cholesterol acyltransferase (LCAT). As part of the SPAP complex, activates spermatozoa motility. The sequence is that of Apolipoprotein A-I (Apoa1) from Heterocephalus glaber (Naked mole rat).